The following is a 312-amino-acid chain: Malate dehydrogenase (312 aa).

Residues 7–13 (GAAGGIG) and aspartate 34 contribute to the NAD(+) site. Arginine 81 and arginine 87 together coordinate substrate. NAD(+) is bound by residues asparagine 94 and 117–119 (ITN). The substrate site is built by asparagine 119 and arginine 153. Histidine 177 acts as the Proton acceptor in catalysis. Methionine 227 contributes to the NAD(+) binding site.

This sequence belongs to the LDH/MDH superfamily. MDH type 1 family. Homodimer.

It carries out the reaction (S)-malate + NAD(+) = oxaloacetate + NADH + H(+). In terms of biological role, catalyzes the reversible oxidation of malate to oxaloacetate. This Salmonella agona (strain SL483) protein is Malate dehydrogenase.